Consider the following 2321-residue polypeptide: Neurogenic locus notch homolog protein 3 (2321 aa).

Residues 1-14 show a composition bias toward basic residues; sequence MGPGARGRRRRRRP. The interval 1–26 is disordered; the sequence is MGPGARGRRRRRRPMSPPPPPPPVRA. The first 39 residues, 1-39, serve as a signal peptide directing secretion; sequence MGPGARGRRRRRRPMSPPPPPPPVRALPLLLLLAGPGAA. Residues 15–25 are compositionally biased toward pro residues; sequence MSPPPPPPPVR. 3 EGF-like domains span residues 40–77, 78–118, and 119–156; these read APPC…ERCQ, LEDP…PDCS, and LPDP…RSCR. At 40–1643 the chain is on the extracellular side; the sequence is APPCLDGSPC…LEPPEPSVPL (1604 aa). 99 cysteine pairs are disulfide-bonded: Cys-43–Cys-55, Cys-49–Cys-65, Cys-67–Cys-76, Cys-82–Cys-93, Cys-87–Cys-106, Cys-108–Cys-117, Cys-123–Cys-134, Cys-128–Cys-144, Cys-146–Cys-155, Cys-162–Cys-174, Cys-168–Cys-183, Cys-185–Cys-194, Cys-201–Cys-212, Cys-206–Cys-222, Cys-224–Cys-233, Cys-240–Cys-251, Cys-245–Cys-260, Cys-262–Cys-271, Cys-278–Cys-291, Cys-285–Cys-300, Cys-302–Cys-311, Cys-318–Cys-329, Cys-323–Cys-338, Cys-340–Cys-349, Cys-355–Cys-366, Cys-360–Cys-377, Cys-379–Cys-388, Cys-395–Cys-408, Cys-402–Cys-417, Cys-419–Cys-428, Cys-435–Cys-446, Cys-440–Cys-455, Cys-457–Cys-466, Cys-473–Cys-484, Cys-478–Cys-493, Cys-495–Cys-504, Cys-511–Cys-522, Cys-516–Cys-531, Cys-533–Cys-542, Cys-549–Cys-559, Cys-554–Cys-568, Cys-570–Cys-579, Cys-586–Cys-597, Cys-591–Cys-606, Cys-608–Cys-617, Cys-624–Cys-634, Cys-629–Cys-643, Cys-645–Cys-654, Cys-661–Cys-672, Cys-666–Cys-681, Cys-683–Cys-692, Cys-699–Cys-709, Cys-704–Cys-718, Cys-720–Cys-729, Cys-738–Cys-749, Cys-743–Cys-758, Cys-760–Cys-769, Cys-775–Cys-786, Cys-780–Cys-796, Cys-798–Cys-807, Cys-814–Cys-826, Cys-820–Cys-835, Cys-837–Cys-846, Cys-853–Cys-864, Cys-858–Cys-873, Cys-875–Cys-884, Cys-891–Cys-901, Cys-896–Cys-910, Cys-912–Cys-921, Cys-928–Cys-939, Cys-933–Cys-948, Cys-950–Cys-959, Cys-966–Cys-977, Cys-971–Cys-986, Cys-988–Cys-997, Cys-1004–Cys-1015, Cys-1009–Cys-1022, Cys-1024–Cys-1033, Cys-1040–Cys-1061, Cys-1055–Cys-1070, Cys-1072–Cys-1081, Cys-1088–Cys-1099, Cys-1093–Cys-1108, Cys-1110–Cys-1119, Cys-1126–Cys-1137, Cys-1131–Cys-1146, Cys-1148–Cys-1157, Cys-1164–Cys-1182, Cys-1176–Cys-1191, Cys-1193–Cys-1202, Cys-1209–Cys-1222, Cys-1214–Cys-1232, Cys-1234–Cys-1243, Cys-1250–Cys-1261, Cys-1255–Cys-1275, Cys-1277–Cys-1286, Cys-1293–Cys-1304, Cys-1298–Cys-1313, and Cys-1315–Cys-1324. The EGF-like 4; calcium-binding domain occupies 158 to 195; it reads DVDECRVGEPCRHGGTCLNTPGSFRCQCPAGYTGPLCE. In terms of domain architecture, EGF-like 5 spans 197-234; it reads PAVPCAPSPCRNGGTCRQSGDLTYDCACLPGFEGQNCE. The EGF-like 6; calcium-binding domain maps to 236–272; the sequence is NVDDCPGHRCLNGGTCVDGVNTYNCQCPPEWTGQFCT. Residues 274 to 312 enclose the EGF-like 7 domain; it reads DVDECQLQPNACHNGGTCFNTLGGHSCVCVNGWTGESCS. The region spanning 314–350 is the EGF-like 8; calcium-binding domain; it reads NIDDCATAVCFHGATCHDRVASFYCACPMGKTGLLCH. An EGF-like 9 domain is found at 351–389; that stretch reads LDDACVSNPCHEDAICDTNPVNGRAICTCPPGFTGGACD. Residues 391–429 form the EGF-like 10; calcium-binding domain; that stretch reads DVDECSIGANPCEHLGRCVNTQGSFLCQCGRGYTGPRCE. In terms of domain architecture, EGF-like 11; calcium-binding spans 431 to 467; that stretch reads DVNECLSGPCRNQATCLDRIGQFTCICMAGFTGTYCE. One can recognise an EGF-like 12; calcium-binding domain in the interval 469 to 505; the sequence is DIDECQSSPCVNGGVCKDRVNGFSCTCPSGFSGSTCQ. Residues 507 to 543 enclose the EGF-like 13; calcium-binding domain; the sequence is DVDECASTPCRNGAKCVDQPDGYECRCAEGFEGTLCD. The EGF-like 14; calcium-binding domain maps to 545–580; it reads NVDDCSPDPCHHGRCVDGIASFSCACAPGYTGTRCE. Residues 582-618 form the EGF-like 15; calcium-binding domain; that stretch reads QVDECRSQPCRHGGKCLDLVDKYLCRCPSGTTGVNCE. Positions 620–655 constitute an EGF-like 16; calcium-binding domain; it reads NIDDCASNPCTFGVCRDGINRYDCVCQPGFTGPLCN. One can recognise an EGF-like 17; calcium-binding domain in the interval 657–693; sequence EINECASSPCGEGGSCVDGENGFRCLCPPGSLPPLCL. 3 EGF-like domains span residues 695–730, 734–770, and 771–808; these read PSHP…PRCS, ARDA…RQCE, and LLSP…PRCQ. The EGF-like 21; calcium-binding domain maps to 810–847; that stretch reads DVDECAGPAPCGPHGICTNLAGSFSCTCHGGYTGPSCD. Positions 849-885 constitute an EGF-like 22; calcium-binding domain; sequence DINDCDPNPCLNGGSCQDGVGSFSCSCLPGFAGPRCA. Positions 887–922 constitute an EGF-like 23; calcium-binding domain; that stretch reads DVDECLSNPCGPGTCTDHVASFTCTCPPGYGGFHCE. EGF-like domains are found at residues 924-960, 962-998, 1000-1034, 1036-1082, and 1084-1120; these read DLPD…AHCQ, EADP…PQCQ, LVDW…RLCD, RSLP…SHCE, and EVDP…DNCE. An EGF-like 29; calcium-binding domain is found at 1122 to 1158; that stretch reads DVDECASQPCQHGGSCIDLVARYLCSCPPGTLGVLCE. Residues 1160 to 1203 enclose the EGF-like 30; calcium-binding domain; the sequence is NEDDCGPGPPLDSGPRCLHNGTCVDLVGGFRCTCPPGYTGLRCE. Asn-1179 carries an N-linked (GlcNAc...) asparagine glycan. EGF-like domains lie at 1205–1244, 1246–1287, 1289–1325, and 1335–1373; these read DINE…PRCQ, VLSP…PRCE, VARS…PSCR, and SNAS…PRCE. Asn-1336 carries N-linked (GlcNAc...) asparagine glycosylation. 12 cysteine pairs are disulfide-bonded: Cys-1339–Cys-1350, Cys-1344–Cys-1361, Cys-1363–Cys-1372, Cys-1387–Cys-1410, Cys-1392–Cys-1405, Cys-1401–Cys-1417, Cys-1428–Cys-1451, Cys-1433–Cys-1446, Cys-1442–Cys-1458, Cys-1467–Cys-1493, Cys-1475–Cys-1488, and Cys-1484–Cys-1500. LNR repeat units follow at residues 1387 to 1427, 1428 to 1458, and 1467 to 1505; these read CPRA…PWRQ, CEAL…NFDC, and CNPV…SEVP. Asn-1438 carries N-linked (GlcNAc...) asparagine glycosylation. The helical transmembrane segment at 1644–1664 threads the bilayer; it reads LPLLVAGAVLLLVILVLGVMV. Residues 1665–2321 lie on the Cytoplasmic side of the membrane; sequence ARRKREHSTL…EVTPKRQVLA (657 aa). ANK repeat units lie at residues 1838 to 1867, 1871 to 1901, 1905 to 1934, 1938 to 1967, and 1971 to 2000; these read TGET…DTNA, SGRT…DLDA, DGST…DVNA, LGKS…NKDM, and KEET…NREI. The tract at residues 2024–2120 is disordered; sequence LDQPSGPRSP…FGGPPASPGG (97 aa). The segment covering 2039-2053 has biased composition (low complexity); the sequence is LGPLLCPPGAFLPGL. Residue Arg-2174 is modified to Omega-N-methylarginine. A disordered region spans residues 2190–2321; sequence APGPQLLNPG…EVTPKRQVLA (132 aa). Residues 2269–2289 are compositionally biased toward low complexity; that stretch reads STPSPATATGAMATTTGALPA. Polar residues predominate over residues 2296–2308; that stretch reads VPSSLAQAQTQLG.

It belongs to the NOTCH family. In terms of assembly, heterodimer of a C-terminal fragment N(TM) and a N-terminal fragment N(EC) which are probably linked by disulfide bonds. Interacts with MAML1, MAML2 and MAML3 which act as transcriptional coactivators for NOTCH3. Interacts with PSMA1. Interacts with HIF1AN. Post-translationally, synthesized in the endoplasmic reticulum as an inactive form which is proteolytically cleaved by a furin-like convertase in the trans-Golgi network before it reaches the plasma membrane to yield an active, ligand-accessible form. Cleavage results in a C-terminal fragment N(TM) and a N-terminal fragment N(EC). Following ligand binding, it is cleaved by TNF-alpha converting enzyme (TACE) to yield a membrane-associated intermediate fragment called notch extracellular truncation (NEXT). This fragment is then cleaved by presenilin dependent gamma-secretase to release a notch-derived peptide containing the intracellular domain (NICD) from the membrane. Phosphorylated. In terms of processing, hydroxylated by HIF1AN. As to expression, ubiquitously expressed in fetal and adult tissues.

It is found in the cell membrane. Its subcellular location is the nucleus. In terms of biological role, functions as a receptor for membrane-bound ligands Jagged1, Jagged2 and Delta1 to regulate cell-fate determination. Upon ligand activation through the released notch intracellular domain (NICD) it forms a transcriptional activator complex with RBPJ/RBPSUH and activates genes of the enhancer of split locus. Affects the implementation of differentiation, proliferation and apoptotic programs. This is Neurogenic locus notch homolog protein 3 (NOTCH3) from Homo sapiens (Human).